A 44-amino-acid chain; its full sequence is Thymosin beta (44 aa).

A compositionally biased stretch (basic and acidic residues) spans 1 to 17; the sequence is MSDKPDVKEVESFDKTT. Residues 1–44 form a disordered region; that stretch reads MSDKPDVKEVESFDKTTLKKTTTNEKNTLPTKEVIEQEKSGGSD. Positions 19–32 are enriched in low complexity; that stretch reads KKTTTNEKNTLPTK. Basic and acidic residues predominate over residues 33–44; that stretch reads EVIEQEKSGGSD.

It belongs to the thymosin beta family.

Its subcellular location is the cytoplasm. It is found in the cytoskeleton. In terms of biological role, plays an important role in the organization of the cytoskeleton. Binds to and sequesters actin monomers (G actin) and therefore inhibits actin polymerization. This is Thymosin beta from Gillichthys mirabilis (Long-jawed mudsucker).